The chain runs to 66 residues: MSDGDTNGPTGPIDRRMLEALVCPMTQAPLSYDAEKQELISKAAHLAYPIRGGIPIMLEEEARKLD.

The protein belongs to the UPF0434 family.

The sequence is that of UPF0434 protein Jann_0424 from Jannaschia sp. (strain CCS1).